The following is a 198-amino-acid chain: Protein-L-isoaspartate O-methyltransferase (198 aa).

The active site involves serine 50.

This sequence belongs to the methyltransferase superfamily. L-isoaspartyl/D-aspartyl protein methyltransferase family.

The protein resides in the cytoplasm. It carries out the reaction [protein]-L-isoaspartate + S-adenosyl-L-methionine = [protein]-L-isoaspartate alpha-methyl ester + S-adenosyl-L-homocysteine. Functionally, catalyzes the methyl esterification of L-isoaspartyl residues in peptides and proteins that result from spontaneous decomposition of normal L-aspartyl and L-asparaginyl residues. It plays a role in the repair and/or degradation of damaged proteins. The chain is Protein-L-isoaspartate O-methyltransferase from Thermosipho melanesiensis (strain DSM 12029 / CIP 104789 / BI429).